A 232-amino-acid polypeptide reads, in one-letter code: Large ribosomal subunit protein uL1 (232 aa).

It belongs to the universal ribosomal protein uL1 family. As to quaternary structure, part of the 50S ribosomal subunit.

Its function is as follows. Binds directly to 23S rRNA. The L1 stalk is quite mobile in the ribosome, and is involved in E site tRNA release. Functionally, protein L1 is also a translational repressor protein, it controls the translation of the L11 operon by binding to its mRNA. The chain is Large ribosomal subunit protein uL1 from Mesorhizobium japonicum (strain LMG 29417 / CECT 9101 / MAFF 303099) (Mesorhizobium loti (strain MAFF 303099)).